The chain runs to 298 residues: Short-chain dehydrogenase reductase 4 (298 aa).

Residue 50–74 coordinates NAD(+); it reads IITGGASGIGAEAVRLFTDHGAKVV. S182 contributes to the substrate binding site. Y195 (proton acceptor) is an active-site residue.

The protein belongs to the short-chain dehydrogenases/reductases (SDR) family.

In Arabidopsis thaliana (Mouse-ear cress), this protein is Short-chain dehydrogenase reductase 4 (SDR4).